Reading from the N-terminus, the 600-residue chain is Dihydroxy-acid dehydratase (600 aa).

D82 is a Mg(2+) binding site. C123 is a [2Fe-2S] cluster binding site. Positions 124 and 125 each coordinate Mg(2+). The residue at position 125 (K125) is an N6-carboxylysine. Position 192 (C192) interacts with [2Fe-2S] cluster. E489 lines the Mg(2+) pocket. Catalysis depends on S515, which acts as the Proton acceptor.

It belongs to the IlvD/Edd family. Homodimer. It depends on [2Fe-2S] cluster as a cofactor. Mg(2+) is required as a cofactor.

The enzyme catalyses (2R)-2,3-dihydroxy-3-methylbutanoate = 3-methyl-2-oxobutanoate + H2O. It catalyses the reaction (2R,3R)-2,3-dihydroxy-3-methylpentanoate = (S)-3-methyl-2-oxopentanoate + H2O. It functions in the pathway amino-acid biosynthesis; L-isoleucine biosynthesis; L-isoleucine from 2-oxobutanoate: step 3/4. It participates in amino-acid biosynthesis; L-valine biosynthesis; L-valine from pyruvate: step 3/4. Functions in the biosynthesis of branched-chain amino acids. Catalyzes the dehydration of (2R,3R)-2,3-dihydroxy-3-methylpentanoate (2,3-dihydroxy-3-methylvalerate) into 2-oxo-3-methylpentanoate (2-oxo-3-methylvalerate) and of (2R)-2,3-dihydroxy-3-methylbutanoate (2,3-dihydroxyisovalerate) into 2-oxo-3-methylbutanoate (2-oxoisovalerate), the penultimate precursor to L-isoleucine and L-valine, respectively. This is Dihydroxy-acid dehydratase from Bacteroides fragilis (strain YCH46).